The sequence spans 509 residues: Probable DNA ligase (509 aa).

Residue D218 participates in ATP binding. The N6-AMP-lysine intermediate role is filled by K220. Positions 225, 240, 269, 302, 374, and 380 each coordinate ATP.

This sequence belongs to the ATP-dependent DNA ligase family. The cofactor is Mg(2+).

It catalyses the reaction ATP + (deoxyribonucleotide)n-3'-hydroxyl + 5'-phospho-(deoxyribonucleotide)m = (deoxyribonucleotide)n+m + AMP + diphosphate.. Its function is as follows. DNA ligase that seals nicks in double-stranded DNA during DNA replication, DNA recombination and DNA repair. In Nocardioides sp. (strain ATCC BAA-499 / JS614), this protein is Probable DNA ligase.